The sequence spans 246 residues: Isoamyl acetate-hydrolyzing esterase (246 aa).

Ser-46 functions as the Nucleophile in the catalytic mechanism. Asp-201 functions as the Proton donor in the catalytic mechanism. Catalysis depends on His-204, which acts as the Proton acceptor.

This sequence belongs to the 'GDSL' lipolytic enzyme family. IAH1 subfamily.

It is found in the cytoplasm. It catalyses the reaction 3-methylbutyl acetate + H2O = 3-methylbutanol + acetate + H(+). In Schizosaccharomyces pombe (strain 972 / ATCC 24843) (Fission yeast), this protein is Isoamyl acetate-hydrolyzing esterase (iah1).